The following is a 993-amino-acid chain: Signal peptide, CUB and EGF-like domain-containing protein 3 (993 aa).

An N-terminal signal peptide occupies residues 1-20 (MGSGRVPGLCLLVLLVHARA). One can recognise an EGF-like 1; calcium-binding domain in the interval 29–69 (DVDECVEGTDNCHIDAICQNTPRSYKCICKSGYTGDGKHCK). 26 disulfides stabilise this stretch: C33–C46, C40–C55, C57–C68, C74–C86, C82–C95, C97–C110, C116–C127, C123–C136, C161–C172, C168–C182, C184–C197, C201–C212, C208–C221, C223–C236, C240–C251, C247–C260, C262–C275, C281–C292, C288–C301, C303–C316, C322–C332, C328–C341, C343–C355, C361–C372, C368–C381, and C383–C397. Residues 70 to 111 (DVDECEREDNAGCVHDCVNIPGNYRCTCYDGFHLAHDGHNCL) enclose the EGF-like 2; calcium-binding domain. An EGF-like 3; calcium-binding domain is found at 112–148 (DVDECAEGNGGCQQSCVNMMGSYECHCREGFFLSDNQ). EGF-like domains are found at residues 157–198 (EGMN…RDCK), 199–237 (LTCN…KTCI), and 238–276 (ETCA…KTCK). The region spanning 277 to 317 (DIDECRLNNGGCDHICRNTVGSFECSCKKGYKLLINERNCQ) is the EGF-like 7; calcium-binding domain. Positions 318–356 (DIDECSFDRTCDHICVNTPGSFQCLCHRGYLLYGITHCG) constitute an EGF-like 8; calcium-binding domain. The region spanning 357-398 (DVDECSINRGGCRFGCINTPGSYQCTCPAGQGRLHWNGKDCT) is the EGF-like 9; calcium-binding domain. N417, N464, N685, N756, and N785 each carry an N-linked (GlcNAc...) asparagine glycan. Cystine bridges form between C804-C830 and C857-C878. Residues 804–916 (CGGELGEFTG…RGFQIPYVTY (113 aa)) form the CUB domain.

Forms homooligomers. Forms heterooligomers with SCUBE1 and SCUBE2. Interacts with TGFBR2 through the CUB domain; this interaction does not affect TGFB1-binding to TGFBR2. Interacts with BMP2, BMP4 and BMP7; the interaction is mediated by the CUB domain. Interacts with BMPR1A, BMPR1B and BMPR2; the interaction with BMPR1A and BMPR1B is BMP2- and BMP4-dependent. Post-translationally, N-glycosylated. In terms of processing, proteolytic cleavage produces a CUB-containing C-terminal fragment that retains the ability to bind to TGFBR2. This reaction is catalyzed in vitro by MMP2 and, to a lesser extent, by MMP9. Highly expressed in osteoblasts. In normal lung, mainly expressed in bronchial epithelial cells. Tends to be up-regulated in lung cancer cells.

The protein resides in the secreted. The protein localises to the cell surface. Is a positive regulator of the BMP signaling pathway, required for proper chondrogenesis, osteogenesis and skeletal development. It acts as a coreceptor for BMP ligands, particularly BMP2 and BMP4, facilitating their interactions with BMP type I receptors. It is required for ligand-induced recruitment of BMP receptors to lipid rafts. Binds to TGFBR2 and activates TGFB signaling. In lung cancer cells, could serve as an endogenous autocrine and paracrine ligand of TGFBR2, which could regulate TGFBR2 signaling and hence modulate epithelial-mesenchymal transition and cancer progression. This is Signal peptide, CUB and EGF-like domain-containing protein 3 from Homo sapiens (Human).